The primary structure comprises 188 residues: GTP cyclohydrolase 1 (188 aa).

Cysteine 75, histidine 78, and cysteine 146 together coordinate Zn(2+).

It belongs to the GTP cyclohydrolase I family. In terms of assembly, toroid-shaped homodecamer, composed of two pentamers of five dimers.

It carries out the reaction GTP + H2O = 7,8-dihydroneopterin 3'-triphosphate + formate + H(+). The protein operates within cofactor biosynthesis; 7,8-dihydroneopterin triphosphate biosynthesis; 7,8-dihydroneopterin triphosphate from GTP: step 1/1. The chain is GTP cyclohydrolase 1 from Hahella chejuensis (strain KCTC 2396).